The sequence spans 243 residues: Protein unc-119 homolog B (243 aa).

Over residues 1-21 the composition is skewed to polar residues; sequence MNSQSSRNETAATAVNGSDSA. The interval 1–49 is disordered; that stretch reads MNSQSSRNETAATAVNGSDSAAASRDHKSGGGVLKRLKSRRNQVDRRPV. Y134 serves as a coordination point for tetradecanoate.

The protein belongs to the PDE6D/unc-119 family. Detected in embryo. Detected in larvae four days after fertilization, in retina and neural tissues (at protein level). Detected in embryos at the sphere stage, during gastrulation, somitogenesis and in swimming larvae, both within and outside of the developing nervous system. Detected in adults.

It is found in the cell projection. The protein localises to the cilium. Myristoyl-binding protein that acts as a cargo adapter: specifically binds the myristoyl moiety of a subset of N-terminally myristoylated proteins and is required for their localization. Plays a key role in localization of proteins to the primary cilium membrane. This Danio rerio (Zebrafish) protein is Protein unc-119 homolog B (unc119b).